The following is a 151-amino-acid chain: uncharacterized protein (151 aa).

Residues 40 to 57 are compositionally biased toward polar residues; sequence QMNRRNSENNTFDASNVG. A disordered region spans residues 40–125; the sequence is QMNRRNSENN…KRQPHYAEPI (86 aa). Over residues 83-110 the composition is skewed to low complexity; that stretch reads QRQNGRQHQHAGQQQPQHQHTQSQTRQT.

This is an uncharacterized protein from Bacillus subtilis (strain 168).